Consider the following 640-residue polypeptide: MAQYKFETEVNQLLSLIIHSLYSNKEIFLRELVSNASDALDKLKYLTLSDEAYKQIKFEPRIDICFDDTANTLTVRDTGLGMNEEDLKNNLGTIARSGTKAFLDQLAAADKKDSNLIGQFGVGFYSAFMAASTIDVISKKAGENDVWKWTSDGKGAYDLEKVDDTAFPIIDGVPEGANGTCVILHLNNEDSEYATRWRIEEIIKTYSDHIAFPIYLHFTEKQYDDKGKVKSEASKTEQINDAGAIWQKPKSELKEEDYFNFYKSLSHDSQEPLLYVHTKAEGTQEYTTLFYVPSKAPFDMFHADYRPGVKLFVKRVFITDDEKELLPTYLRFVRGVIDSEDLPLNVSREILQQNRILSNIKNASVKKLLGEFKKLAENDKEKYNKFIAEFNRPLKEGLYSDYEHREELADLVRFKTTSPEVKEDEWTSFADYVSRMKSDQKAIYYITGEDEKTLRQSPHLEVYKQKGFEVLIMPDEIDDIIIPSLGKYKDWELKAANRAGSDKELNTEEETKEAEKKEKDFKPVLEKIKEVLGDKVKEVRFSKRLSDSPSCIVVDETDPSLQMERMMRAMGQFNTSAVKPILEVNADHPLVQKLKDSKDKEFVEDMSNLLLEQALLVESGELKAPVDFVKRLNRLMTNLK.

An a; substrate-binding region spans residues 1–348; sequence MAQYKFETEV…SEDLPLNVSR (348 aa). The b stretch occupies residues 349–565; it reads EILQQNRILS…ETDPSLQMER (217 aa). The segment at 566–640 is c; sequence MMRAMGQFNT…RLNRLMTNLK (75 aa).

It belongs to the heat shock protein 90 family. Homodimer.

The protein resides in the cytoplasm. In terms of biological role, molecular chaperone. Has ATPase activity. The polypeptide is Chaperone protein HtpG (Treponema denticola (strain ATCC 35405 / DSM 14222 / CIP 103919 / JCM 8153 / KCTC 15104)).